An 898-amino-acid polypeptide reads, in one-letter code: DNA gyrase subunit A (898 aa).

Disordered stretches follow at residues 1-22 (MSDD…DDDS) and 36-56 (EEEK…EKEG). Positions 97-562 (LPDARDGLKP…VMSSINNEDL (466 aa)) constitute a Topo IIA-type catalytic domain. Tyr-185 serves as the catalytic O-(5'-phospho-DNA)-tyrosine intermediate. The short motif at 589–595 (QRRGGVG) is the GyrA-box element.

The protein belongs to the type II topoisomerase GyrA/ParC subunit family. As to quaternary structure, heterotetramer, composed of two GyrA and two GyrB chains. In the heterotetramer, GyrA contains the active site tyrosine that forms a transient covalent intermediate with DNA, while GyrB binds cofactors and catalyzes ATP hydrolysis.

It localises to the cytoplasm. It carries out the reaction ATP-dependent breakage, passage and rejoining of double-stranded DNA.. Functionally, a type II topoisomerase that negatively supercoils closed circular double-stranded (ds) DNA in an ATP-dependent manner to modulate DNA topology and maintain chromosomes in an underwound state. Negative supercoiling favors strand separation, and DNA replication, transcription, recombination and repair, all of which involve strand separation. Also able to catalyze the interconversion of other topological isomers of dsDNA rings, including catenanes and knotted rings. Type II topoisomerases break and join 2 DNA strands simultaneously in an ATP-dependent manner. This Metamycoplasma arthritidis (strain 158L3-1) (Mycoplasma arthritidis) protein is DNA gyrase subunit A.